Here is a 328-residue protein sequence, read N- to C-terminus: Malate dehydrogenase (328 aa).

An NAD(+)-binding site is contributed by G12–A18. Residues R93 and R99 each coordinate substrate. NAD(+) contacts are provided by residues N106, Q113, and V130–N132. Residues N132 and R163 each contribute to the substrate site. The Proton acceptor role is filled by H188.

The protein belongs to the LDH/MDH superfamily. MDH type 2 family.

It catalyses the reaction (S)-malate + NAD(+) = oxaloacetate + NADH + H(+). Catalyzes the reversible oxidation of malate to oxaloacetate. The protein is Malate dehydrogenase of Burkholderia ambifaria (strain ATCC BAA-244 / DSM 16087 / CCUG 44356 / LMG 19182 / AMMD) (Burkholderia cepacia (strain AMMD)).